The sequence spans 450 residues: Glutamate--tRNA ligase 1 (450 aa).

Residues 7 to 17 (PSPTGYMHVGN) carry the 'HIGH' region motif. Residues 236–240 (KISKR) carry the 'KMSKS' region motif. Position 239 (K239) interacts with ATP.

This sequence belongs to the class-I aminoacyl-tRNA synthetase family. Glutamate--tRNA ligase type 1 subfamily. In terms of assembly, monomer.

Its subcellular location is the cytoplasm. It catalyses the reaction tRNA(Glu) + L-glutamate + ATP = L-glutamyl-tRNA(Glu) + AMP + diphosphate. In terms of biological role, catalyzes the attachment of glutamate to tRNA(Glu) in a two-step reaction: glutamate is first activated by ATP to form Glu-AMP and then transferred to the acceptor end of tRNA(Glu). This chain is Glutamate--tRNA ligase 1, found in Anaplasma phagocytophilum (strain HZ).